A 1154-amino-acid polypeptide reads, in one-letter code: Chromosome partition protein Smc (1154 aa).

Position 32-39 (32-39 (PNGCGKSN)) interacts with ATP. Coiled coils occupy residues 170 to 215 (VAGL…ARQA), 282 to 505 (LREA…LNGE), and 627 to 993 (AARR…EARE).

It belongs to the SMC family. As to quaternary structure, homodimer.

It localises to the cytoplasm. Required for chromosome condensation and partitioning. In Rhodopseudomonas palustris (strain ATCC BAA-98 / CGA009), this protein is Chromosome partition protein Smc.